The primary structure comprises 490 residues: Bifunctional NAD(P)H-hydrate repair enzyme Nnr (490 aa).

The region spanning 1 to 204 is the YjeF N-terminal domain; it reads MKEIDELTIK…NIGHPVHLIN (204 aa). Residues 1–204 are NAD(P)H-hydrate epimerase; sequence MKEIDELTIK…NIGHPVHLIN (204 aa). The tract at residues 51-55 is NADPHX 1; for epimerase activity; it reads NNGGD. K(+) contacts are provided by asparagine 52 and aspartate 114. Positions 118–124 are NADPHX 1; for epimerase activity; that stretch reads GTGLRGE. Tyrosine 129 and aspartate 147 together coordinate (6S)-NADPHX. K(+) is bound at residue serine 150. One can recognise a YjeF C-terminal domain in the interval 212-488; that stretch reads TREMVRSLLP…RLIPEAIRRL (277 aa). The segment at 212–490 is ADP-dependent (S)-NAD(P)H-hydrate dehydratase; that stretch reads TREMVRSLLP…IPEAIRRLKE (279 aa). Glycine 317 provides a ligand contact to (6S)-NADPHX. Residues 366-372 are NADPHX 2; for dehydratase activity; the sequence is HPGEMAR. Residues 402–406 and 421–430 contribute to the ADP site; these read KSATT and NTGLSKGGSG. Aspartate 431 lines the (6S)-NADPHX pocket.

This sequence in the N-terminal section; belongs to the NnrE/AIBP family. It in the C-terminal section; belongs to the NnrD/CARKD family. Requires K(+) as cofactor.

The catalysed reaction is (6S)-NADHX + ADP = AMP + phosphate + NADH + H(+). It catalyses the reaction (6S)-NADPHX + ADP = AMP + phosphate + NADPH + H(+). It carries out the reaction (6R)-NADHX = (6S)-NADHX. The enzyme catalyses (6R)-NADPHX = (6S)-NADPHX. In terms of biological role, bifunctional enzyme that catalyzes the epimerization of the S- and R-forms of NAD(P)HX and the dehydration of the S-form of NAD(P)HX at the expense of ADP, which is converted to AMP. This allows the repair of both epimers of NAD(P)HX, a damaged form of NAD(P)H that is a result of enzymatic or heat-dependent hydration. This chain is Bifunctional NAD(P)H-hydrate repair enzyme Nnr (nnr), found in Thermotoga maritima (strain ATCC 43589 / DSM 3109 / JCM 10099 / NBRC 100826 / MSB8).